The chain runs to 363 residues: Class I histocompatibility antigen, Gogo-B*0201 alpha chain (363 aa).

An N-terminal signal peptide occupies residues 1–24; sequence MQVTAPRTLLLLLSAALALTETWA. Residues 25–114 form an alpha-1 region; sequence GSHSMRYFHT…LRGYYNQSED (90 aa). Residues 25–308 are Extracellular-facing; it reads GSHSMRYFHT…EPSSQSTIPI (284 aa). Asparagine 110 carries an N-linked (GlcNAc...) asparagine glycan. The interval 115–206 is alpha-2; that stretch reads GSHTIQRMYG…ENGKETLQRA (92 aa). 2 disulfide bridges follow: cysteine 125–cysteine 188 and cysteine 227–cysteine 283. The alpha-3 stretch occupies residues 207-298; it reads DPPKTHVTHH…GLPEPLTLRW (92 aa). The Ig-like C1-type domain occupies 209 to 297; it reads PKTHVTHHPI…EGLPEPLTLR (89 aa). The segment at 299 to 308 is connecting peptide; it reads EPSSQSTIPI. Residues 309 to 333 traverse the membrane as a helical segment; sequence VGIVAGLAVLVVTVAVVAVVAAVMC. At 334–363 the chain is on the cytoplasmic side; the sequence is RRKSSGGKGGSYSQAASSDSAQGSDVSLTA. The tract at residues 336–363 is disordered; it reads KSSGGKGGSYSQAASSDSAQGSDVSLTA. Low complexity predominate over residues 344-363; sequence SYSQAASSDSAQGSDVSLTA.

This sequence belongs to the MHC class I family. In terms of assembly, heterodimer of an alpha chain and a beta chain (beta-2-microglobulin).

The protein resides in the membrane. In terms of biological role, involved in the presentation of foreign antigens to the immune system. In Gorilla gorilla gorilla (Western lowland gorilla), this protein is Class I histocompatibility antigen, Gogo-B*0201 alpha chain.